We begin with the raw amino-acid sequence, 703 residues long: Probable ATP-dependent RNA helicase vasa-like (703 aa).

Disordered regions lie at residues 1-22, 35-73, and 88-167; these read MSDD…ESFG, NTGN…GRGG, and RDCP…RGCF. The span at 61–73 shows a compositional bias: gly residues; the sequence is SGGGGFGGRGRGG. Residues 77–92 form a CCHC-type 1 zinc finger; that stretch reads CFKCGDEGHMARDCPS. Residues 146 to 155 show a composition bias toward gly residues; sequence FGFGSGSGSR. 2 consecutive CCHC-type zinc fingers follow at residues 166–181 and 189–204; these read CFKC…DCPS and CFKC…DCPN. The short motif at 261–289 is the Q motif element; that stretch reads ESFQSMNLRPLLLENIVKAGYGCPTPVQK. The Helicase ATP-binding domain maps to 292–475; it reads IPNVMNGRDI…SAFLNNYLFV (184 aa). 305 to 312 contacts ATP; it reads AQTGSGKT. The short motif at 419 to 422 is the DEAD box element; that stretch reads DEAD. A Helicase C-terminal domain is found at 506–651; that stretch reads MCEEILISAD…TIPDWLTQKA (146 aa). Residues 676–703 are disordered; the sequence is GGGRGWEKNQASSFLGGPSESNVDEEWD.

This sequence belongs to the DEAD box helicase family. DDX4/VASA subfamily. Expressed in ovaries and testis. Not expressed in somatic tissue of the ovaries including follicle cells, muscle and connective tissue.

It localises to the cytoplasm. Its subcellular location is the nucleus. The protein localises to the nucleolus. The enzyme catalyses ATP + H2O = ADP + phosphate + H(+). Its function is as follows. Involved in translational control mechanisms operating in early stages of oogenesis. Required maternally in many stages of oogenesis, including cystocyte differentiation, oocyte differentiation, and specification of anterior-posterior polarity in the developing cysts. Essential for the formation and/or structural integrity of perinuclear nuage particles during germ cell formation. In Penaeus vannamei (Whiteleg shrimp), this protein is Probable ATP-dependent RNA helicase vasa-like.